The primary structure comprises 337 residues: Tryptophan--tRNA ligase (337 aa).

Residues 9–11 (RPT) and 17–18 (GH) contribute to the ATP site. The short motif at 10–18 (PTGRLHLGH) is the 'HIGH' region element. Asp-137 is an L-tryptophan binding site. ATP-binding positions include 149–151 (GKD), Leu-187, and 195–199 (KMSKS). The short motif at 195-199 (KMSKS) is the 'KMSKS' region element.

It belongs to the class-I aminoacyl-tRNA synthetase family. Homodimer.

It localises to the cytoplasm. It catalyses the reaction tRNA(Trp) + L-tryptophan + ATP = L-tryptophyl-tRNA(Trp) + AMP + diphosphate + H(+). Its function is as follows. Catalyzes the attachment of tryptophan to tRNA(Trp). This chain is Tryptophan--tRNA ligase, found in Treponema pallidum (strain Nichols).